Reading from the N-terminus, the 200-residue chain is ATP-dependent Clp protease proteolytic subunit (200 aa).

Ser101 acts as the Nucleophile in catalysis. His126 is an active-site residue.

It belongs to the peptidase S14 family. In terms of assembly, component of the chloroplastic Clp protease core complex.

It localises to the plastid. It is found in the chloroplast stroma. The enzyme catalyses Hydrolysis of proteins to small peptides in the presence of ATP and magnesium. alpha-casein is the usual test substrate. In the absence of ATP, only oligopeptides shorter than five residues are hydrolyzed (such as succinyl-Leu-Tyr-|-NHMec, and Leu-Tyr-Leu-|-Tyr-Trp, in which cleavage of the -Tyr-|-Leu- and -Tyr-|-Trp bonds also occurs).. Functionally, cleaves peptides in various proteins in a process that requires ATP hydrolysis. Has a chymotrypsin-like activity. Plays a major role in the degradation of misfolded proteins. The chain is ATP-dependent Clp protease proteolytic subunit from Adiantum capillus-veneris (Maidenhair fern).